The chain runs to 391 residues: uncharacterized protein (391 aa).

The region spanning 235–330 is the HTH arsR-type domain; it reads VFILSRINLL…LYLKNETQKS (96 aa).

This is an uncharacterized protein from Methanocaldococcus jannaschii (strain ATCC 43067 / DSM 2661 / JAL-1 / JCM 10045 / NBRC 100440) (Methanococcus jannaschii).